The following is a 745-amino-acid chain: MATPRLTRNSQQQNRISQGSNSRQTTLLDWKVKDKAGNSKSVLEESSSLEDSNHADDQTEDALQTAVEYFQKGPKKASLSKDSVLEKHLKTVENVAWNNGLAPEAIDILLNVALSGKFGNALSTRILKCMIPETHISEDSVVKAVSWLCVGKCSGNTKVLFYRWLVAMFDFIDHKKQINSLYGFFFVSLQDDTLCPYVCHLLYLLTKKENVKPFRARKLLDLQAKMGMQPHLQALLSLYKFFAPTLISVSLPVRKKIFFNNSKNLWTPALLAVKLRNQGIFPEPLKLQLGPTSGRSLKRKWNYHSVIPAVNSAKKECREKMSLFDYLSNDRSLPVEQLQSFPQLLENIHCLELPSQMSSVLNSSLLLHYVNCVKDESILLRLSYWLSQTLQEECVWYNMNDYQQEKEFINFLDMVIRVQCFLQEGFYSCEAFLYKSLPLWDGFSCRSQFLKLLAWIPFSSFSEIKPLLLDHLAPLFFTSSIYFKCSLLQCLKDLLQNWLLWLSTEAQVQPMTDSPLETTLGGSMDSVSQLIEYIGWLSMVAIRLESSSTLLVHFILDFYEKVCDIYINYDLPLVVLFPPVVFHSAFLSLDATILNQLCYIMYRYRDNLTAAKKKDLVQKAKSEFSISSKICKEFNYYLTALVHCLWSSRPFETGVYIDPQIIENTGETQYKHNLNFVHHPCLLNYAASFLLQESPEEMPVHLSSIRGKKWNWYLDHLYSEGFQGLNLFIKSSIDHSSVSKTEKNT.

Residues M1 to L27 are compositionally biased toward polar residues. The interval M1–Q58 is disordered. Over residues S39–E50 the composition is skewed to low complexity.

Belongs to the CENP-I/CTF3 family. Component of the CENPA-CAD complex, composed of CENPI, CENPK, CENPL, CENPO, CENPP, CENPQ, CENPR and CENPS. The CENPA-CAD complex interacts with the CENPA-NAC complex, at least composed of CENPA, CENPC, CENPH, CENPM, CENPN, CENPT and CENPU. Interacts with SENP6. Sumoylated. Sumoylated form can be polyubiquitinated by RNF4, leading to its degradation. Desumoylation by SENP6 prevents its degradation. Highly expressed in testis, ovary and spleen. A much lower mRNA level is found in brain and lung, and no expression is detected in liver, kidney, heart, muscle, pituitary gland, prostate, epididymis and seminal vesicle.

The protein resides in the nucleus. Its subcellular location is the chromosome. It localises to the centromere. In terms of biological role, component of the CENPA-CAD (nucleosome distal) complex, a complex recruited to centromeres which is involved in assembly of kinetochore proteins, mitotic progression and chromosome segregation. May be involved in incorporation of newly synthesized CENPA into centromeres via its interaction with the CENPA-NAC complex. Required for the localization of CENPF, MAD1L1 and MAD2 (MAD2L1 or MAD2L2) to kinetochores. Involved in the response of gonadal tissues to follicle-stimulating hormone. This Rattus norvegicus (Rat) protein is Centromere protein I (Cenpi).